The sequence spans 442 residues: Chromosomal replication initiator protein DnaA (442 aa).

A domain I, interacts with DnaA modulators region spans residues 1–69 (METLWDGILS…AQAGEQVIGR (69 aa)). A domain II region spans residues 69 to 103 (RPIQVDFIVSEQSEEALKPVIEREPAPAAPPANVA). The segment at 104–320 (SLNSKYTFSR…GALIRAVAYV (217 aa)) is domain III, AAA+ region. ATP is bound by residues G148, G150, K151, and T152. Residues 321–442 (SISGLPMTVE…GNRLEADARH (122 aa)) form a domain IV, binds dsDNA region.

This sequence belongs to the DnaA family. As to quaternary structure, oligomerizes as a right-handed, spiral filament on DNA at oriC.

It localises to the cytoplasm. Functionally, plays an essential role in the initiation and regulation of chromosomal replication. ATP-DnaA binds to the origin of replication (oriC) to initiate formation of the DNA replication initiation complex once per cell cycle. Binds the DnaA box (a 9 base pair repeat at the origin) and separates the double-stranded (ds)DNA. Forms a right-handed helical filament on oriC DNA; dsDNA binds to the exterior of the filament while single-stranded (ss)DNA is stabiized in the filament's interior. The ATP-DnaA-oriC complex binds and stabilizes one strand of the AT-rich DNA unwinding element (DUE), permitting loading of DNA polymerase. After initiation quickly degrades to an ADP-DnaA complex that is not apt for DNA replication. Binds acidic phospholipids. In Gloeobacter violaceus (strain ATCC 29082 / PCC 7421), this protein is Chromosomal replication initiator protein DnaA.